The chain runs to 88 residues: Serine protease inhibitor Kazal-type 11 (88 aa).

The first 24 residues, 1-24 (MSSTWIKFLFILTLVLLPYFVAES), serve as a signal peptide directing secretion. The 56-residue stretch at 32 to 87 (LRKVPNCTLYKSESDCSRTLIPVCADNQMTYYNACYFCLEQLVSPIKYKYHGICTK) folds into the Kazal-like domain. N-linked (GlcNAc...) asparagine glycosylation occurs at Asn-37. 3 cysteine pairs are disulfide-bonded: Cys-38–Cys-69, Cys-47–Cys-66, and Cys-55–Cys-85.

In terms of tissue distribution, expressed in epydiymis, in the caput. Also expressed in seminal vesicles.

The protein resides in the secreted. Probable serine protease inhibitor. The chain is Serine protease inhibitor Kazal-type 11 (Spink11) from Mus musculus (Mouse).